Here is a 193-residue protein sequence, read N- to C-terminus: MSSHLARLEALLFVAGEDGLSLRTMAQLLEIPVTGLTQSLEKLQAKYKADEDTALCLLESSNTYKIVTKPDFACLLRDYSKTPINQSLSRASLEVLSIVAYKQPITRAEVDDIRGVNSSGAIAKLQAFGLIREAGKKDAVGRPNLYATTDYFLDYIGINSLDELVAIDQLELEEQETSLFREDAPEDLEDLDN.

Belongs to the ScpB family. In terms of assembly, homodimer. Homodimerization may be required to stabilize the binding of ScpA to the Smc head domains. Component of a cohesin-like complex composed of ScpA, ScpB and the Smc homodimer, in which ScpA and ScpB bind to the head domain of Smc. The presence of the three proteins is required for the association of the complex with DNA.

Its subcellular location is the cytoplasm. Participates in chromosomal partition during cell division. May act via the formation of a condensin-like complex containing Smc and ScpA that pull DNA away from mid-cell into both cell halves. In Streptococcus thermophilus (strain CNRZ 1066), this protein is Segregation and condensation protein B.